The primary structure comprises 204 residues: Ribosomal RNA small subunit methyltransferase J (204 aa).

S-adenosyl-L-methionine contacts are provided by residues 55 to 56 (RD), 71 to 72 (ER), and aspartate 123.

This sequence belongs to the methyltransferase superfamily. RsmJ family.

The protein localises to the cytoplasm. It catalyses the reaction guanosine(1516) in 16S rRNA + S-adenosyl-L-methionine = N(2)-methylguanosine(1516) in 16S rRNA + S-adenosyl-L-homocysteine + H(+). In terms of biological role, specifically methylates the guanosine in position 1516 of 16S rRNA. The sequence is that of Ribosomal RNA small subunit methyltransferase J from Rhodopseudomonas palustris (strain TIE-1).